The sequence spans 206 residues: Large ribosomal subunit protein uL22m (206 aa).

A mitochondrion-targeting transit peptide spans 1–40; the sequence is MAAALLRELGALRVPNLRIWATQTLRVLPPSCIHTSASLD.

Belongs to the universal ribosomal protein uL22 family. As to quaternary structure, component of the mitochondrial ribosome large subunit (39S) which comprises a 16S rRNA and about 50 distinct proteins.

The protein resides in the mitochondrion. The polypeptide is Large ribosomal subunit protein uL22m (Mrpl22) (Mus musculus (Mouse)).